Here is a 424-residue protein sequence, read N- to C-terminus: Interleukin-13 receptor subunit alpha-1 (424 aa).

An N-terminal signal peptide occupies residues 1 to 25 (MARPALLGELLVLLLWTATVGQVAA). Over 26 to 340 (ATEVQPPVTN…QSIGKEQNST (315 aa)) the chain is Extracellular. Positions 32-121 (PVTNLSVSVE…VKKCISPPEG (90 aa)) constitute a Fibronectin type-III 1 domain. N-linked (GlcNAc...) asparagine glycans are attached at residues N35, N59, N103, and N136. Residues C44 and C93 are joined by a disulfide bond. 2 disulfide bridges follow: C132/C142 and C171/C183. Positions 224-336 (KPDPPHIKHL…WSEAQSIGKE (113 aa)) constitute a Fibronectin type-III 2 domain. Residue N262 is glycosylated (N-linked (GlcNAc...) asparagine). Residues 324 to 328 (WSDWS) carry the WSXWS motif motif. N-linked (GlcNAc...) asparagine glycosylation occurs at N338. The chain crosses the membrane as a helical span at residues 341 to 364 (FYTTMLLTIPVFVAVAVIILLFYL). Residues 365-424 (KRLKIIIFPPIPDPGKIFKEMFGDQNDDTLHWKKYDIYEKQSKEETDSVVLIENLKKAAP) are Cytoplasmic-facing. Positions 371 to 379 (IFPPIPDPG) match the Box 1 motif motif.

It belongs to the type I cytokine receptor family. Type 5 subfamily. In terms of assembly, interleukin-13 receptor is a complex of IL4R, IL13RA1, and possibly other components. Interacts with TRAF3IP1. Interacts with IL4. As to expression, spleen, liver, thymus, heart, lung, kidney, testis, stomach, brain, skin, and colon; but not skeletal muscle.

Its subcellular location is the membrane. Functionally, binds with low affinity to interleukin-13 (IL13). Together with IL4RA can form a functional receptor for IL13. Also serves as an alternate accessory protein to the common cytokine receptor gamma chain for interleukin-4 (IL4) signaling, but cannot replace the function of IL2RG in allowing enhanced interleukin-2 (IL2) binding activity. The polypeptide is Interleukin-13 receptor subunit alpha-1 (Il13ra1) (Mus musculus (Mouse)).